Reading from the N-terminus, the 362-residue chain is Peptide chain release factor 1 (362 aa).

The residue at position 235 (Gln-235) is an N5-methylglutamine.

It belongs to the prokaryotic/mitochondrial release factor family. Post-translationally, methylated by PrmC. Methylation increases the termination efficiency of RF1.

The protein localises to the cytoplasm. Peptide chain release factor 1 directs the termination of translation in response to the peptide chain termination codons UAG and UAA. The polypeptide is Peptide chain release factor 1 (Acinetobacter baumannii (strain AYE)).